The following is a 363-amino-acid chain: sn-glycerol-3-phosphate import ATP-binding protein UgpC (363 aa).

Residues 4 to 235 (VVLRNVRKTY…PATTFVASFI (232 aa)) enclose the ABC transporter domain. Residue 37–44 (GPSGCGKS) coordinates ATP.

This sequence belongs to the ABC transporter superfamily. sn-glycerol-3-phosphate importer (TC 3.A.1.1.3) family. In terms of assembly, the complex is composed of two ATP-binding proteins (UgpC), two transmembrane proteins (UgpA and UgpE) and a solute-binding protein (UgpB).

It is found in the cell inner membrane. The catalysed reaction is sn-glycerol 3-phosphate(out) + ATP + H2O = sn-glycerol 3-phosphate(in) + ADP + phosphate + H(+). Functionally, part of the ABC transporter complex UgpBAEC involved in sn-glycerol-3-phosphate (G3P) import. Responsible for energy coupling to the transport system. The polypeptide is sn-glycerol-3-phosphate import ATP-binding protein UgpC (Rhodopseudomonas palustris (strain ATCC BAA-98 / CGA009)).